We begin with the raw amino-acid sequence, 470 residues long: Tryptophan synthase beta chain 1, chloroplastic (470 aa).

The segment covering 1–10 (MAASGTSATF) has biased composition (polar residues). The disordered stretch occupies residues 1–24 (MAASGTSATFRASVSSAPSSSSQL). Low complexity predominate over residues 12–22 (ASVSSAPSSSS). An N6-(pyridoxal phosphate)lysine modification is found at Lys-165.

The protein belongs to the TrpB family. In terms of assembly, tetramer of two alpha and two beta chains. Requires pyridoxal 5'-phosphate as cofactor.

The protein resides in the plastid. The protein localises to the chloroplast. It carries out the reaction (1S,2R)-1-C-(indol-3-yl)glycerol 3-phosphate + L-serine = D-glyceraldehyde 3-phosphate + L-tryptophan + H2O. Its pathway is amino-acid biosynthesis; L-tryptophan biosynthesis; L-tryptophan from chorismate: step 5/5. In terms of biological role, the beta subunit is responsible for the synthesis of L-tryptophan from indole and L-serine. This is Tryptophan synthase beta chain 1, chloroplastic (TSB1) from Arabidopsis thaliana (Mouse-ear cress).